Consider the following 144-residue polypeptide: Large ribosomal subunit protein uL13 (144 aa).

Positions 125-144 (YRGPEHPHQAQKPQPLEVKA) are disordered.

The protein belongs to the universal ribosomal protein uL13 family. As to quaternary structure, part of the 50S ribosomal subunit.

This protein is one of the early assembly proteins of the 50S ribosomal subunit, although it is not seen to bind rRNA by itself. It is important during the early stages of 50S assembly. In Aquifex aeolicus (strain VF5), this protein is Large ribosomal subunit protein uL13.